The sequence spans 123 residues: Protein Wnt-3 (123 aa).

A lipid anchor (O-palmitoleoyl serine; by PORCN) is attached at serine 1. Residues cysteine 89 and cysteine 104 are joined by a disulfide bond. An N-linked (GlcNAc...) asparagine glycan is attached at asparagine 90.

This sequence belongs to the Wnt family. Post-translationally, palmitoleoylation is required for efficient binding to frizzled receptors. Depalmitoleoylation leads to Wnt signaling pathway inhibition.

Its subcellular location is the secreted. It is found in the extracellular space. It localises to the extracellular matrix. Functionally, ligand for members of the frizzled family of seven transmembrane receptors. Functions in the canonical Wnt signaling pathway that results in activation of transcription factors of the TCF/LEF family. Required for normal embryonic development. This Eptatretus stoutii (Pacific hagfish) protein is Protein Wnt-3 (WNT-3).